A 513-amino-acid polypeptide reads, in one-letter code: Secreted LysM effector Vd6LysM (513 aa).

Positions 1-19 (MSFIKSLLLAAAAVASVSA) are cleaved as a signal peptide. LysM domains are found at residues 38 to 85 (SYWV…SYCV), 136 to 182 (KFHW…NVCV), 219 to 265 (KFHW…QVCV), and 302 to 348 (KFHW…QVCV). Over residues 357–367 (TTTRPPTTTAP) the composition is skewed to low complexity. Positions 357 to 377 (TTTRPPTTTAPGNGVSTPQPT) are disordered. 2 LysM domains span residues 387 to 433 (KFHW…NVCV) and 465 to 511 (KFHW…NVCV).

The protein belongs to the secreted LysM effector family.

Might have a role in sequestration of chitin oligosaccharides (breakdown products of fungal cell walls that are released during invasion and act as triggers of host immunity) to dampen host defense. Does not play an important role during host colonization. This chain is Secreted LysM effector Vd6LysM, found in Verticillium dahliae (strain VdLs.17 / ATCC MYA-4575 / FGSC 10137) (Verticillium wilt).